We begin with the raw amino-acid sequence, 242 residues long: Probable transcriptional regulatory protein PG_0097 (242 aa).

It belongs to the TACO1 family.

The protein localises to the cytoplasm. The protein is Probable transcriptional regulatory protein PG_0097 of Porphyromonas gingivalis (strain ATCC BAA-308 / W83).